Consider the following 457-residue polypeptide: G-protein coupled receptor 135 (457 aa).

The tract at residues 1 to 26 (MEEQARPPGRPAASATLQGSAHPGGA) is disordered. The Extracellular portion of the chain corresponds to 1 to 64 (MEEQARPPGR…EAAGSRGPAP (64 aa)). Asn-47 carries N-linked (GlcNAc...) asparagine glycosylation. The chain crosses the membrane as a helical span at residues 65-85 (LLWHGAAVAAQALVLLLIFLL). The Cytoplasmic portion of the chain corresponds to 86-109 (SSLGNCAVMGVIVKHRQLRTVTNA). Residues 110–130 (FILSLSLSDLLTALLCLPAAF) form a helical membrane-spanning segment. The Extracellular segment spans residues 131 to 156 (LDLFAPPGDSGPWRSFCAASRFFSSC). A helical membrane pass occupies residues 157-177 (FGIVSTFSVALISLDRYCAIV). Residues 178 to 189 (RPPRDKLGRRRA) lie on the Cytoplasmic side of the membrane. Residues 190–210 (LQLLAGAWLAALGFSLPWDLL) form a helical membrane-spanning segment. Residues 211 to 235 (RAPREPPAPQSFHRCLYRTSPDPAQ) lie on the Extracellular side of the membrane. A helical membrane pass occupies residues 236-256 (LGVAYSVGLVVACYLLPFLLM). Over 257–295 (CFCRYHICKTVRLSDVRVRPMTTYARVLRFFSEVRTATT) the chain is Cytoplasmic. Residues 296–316 (VLIMIIFVMCCWGPYCFLVLL) form a helical membrane-spanning segment. The Extracellular portion of the chain corresponds to 317–329 (AATRQGQATQAPS). The helical transmembrane segment at 330 to 350 (LLNVAAVWLTWANGAINPVIY) threads the bilayer. The Cytoplasmic portion of the chain corresponds to 351 to 457 (AIRNPNISML…HNSETRDSSI (107 aa)).

This sequence belongs to the G-protein coupled receptor 1 family. Interacts with MTNR1B. Interacts with ARRB1 and ARRB2 in a spontaneous and agonist-independent manner; leading to the internalization of GPR135 in the endosomal compartment.

It localises to the cell membrane. It is found in the endosome membrane. Orphan receptor. Has spontaneous activity for beta-arrestin recruitment. Shows a reciprocal regulatory interaction with the melatonin receptor MTNR1B most likely through receptor heteromerization. In Mus musculus (Mouse), this protein is G-protein coupled receptor 135 (Gpr135).